A 307-amino-acid chain; its full sequence is Leucine-rich repeat-containing protein 25 (307 aa).

The first 20 residues, M1–S20, serve as a signal peptide directing secretion. Over Q21–A168 the chain is Extracellular. N44 and N56 each carry an N-linked (GlcNAc...) asparagine glycan. LRR repeat units follow at residues S63–E86 and Q87–C110. N-linked (GlcNAc...) asparagine glycans are attached at residues N95, N132, and N151. The helical transmembrane segment at I169–L189 threads the bilayer. The Cytoplasmic portion of the chain corresponds to A190–R307. The tract at residues T205 to V249 is disordered. Residues G211 to G226 show a composition bias toward low complexity. Over residues P232–D243 the composition is skewed to polar residues. Position 286 is a phosphotyrosine (Y286).

Interacts with RIGI. Interacts with SQSTM1. Interacts with p65/RELA; this interaction promotes the degradation of RELA through autophagy.

The protein resides in the membrane. It localises to the cytoplasm. In terms of biological role, plays a role in the inhibition of RLR-mediated type I interferon signaling pathway by targeting RIGI for autophagic degradation. Interacts specifically with ISG15-associated RIGI to promote interaction between RIGI and the autophagic cargo receptor p62/SQSTM1 to mediate RIGI degradation via selective autophagy. Plays also a role in the inhibition of NF-kappa-B signaling pathway and inflammatory response by promoting the degradation of p65/RELA. This Bos taurus (Bovine) protein is Leucine-rich repeat-containing protein 25 (LRRC25).